The sequence spans 270 residues: Phosphatidylglycerol--prolipoprotein diacylglyceryl transferase (270 aa).

Transmembrane regions (helical) follow at residues 17-37, 63-83, and 95-115; these read LAIH…MFLG, ILFL…CLFY, and IFYI…VIAS. R146 contributes to the a 1,2-diacyl-sn-glycero-3-phospho-(1'-sn-glycerol) binding site. The next 3 membrane-spanning stretches (helical) occupy residues 182–202, 209–229, and 243–263; these read SQVY…WLYA, GEVA…AEYF, and MSMG…LWVW.

The protein belongs to the Lgt family.

It is found in the cell inner membrane. It carries out the reaction L-cysteinyl-[prolipoprotein] + a 1,2-diacyl-sn-glycero-3-phospho-(1'-sn-glycerol) = an S-1,2-diacyl-sn-glyceryl-L-cysteinyl-[prolipoprotein] + sn-glycerol 1-phosphate + H(+). It functions in the pathway protein modification; lipoprotein biosynthesis (diacylglyceryl transfer). Its function is as follows. Catalyzes the transfer of the diacylglyceryl group from phosphatidylglycerol to the sulfhydryl group of the N-terminal cysteine of a prolipoprotein, the first step in the formation of mature lipoproteins. This Paracidovorax citrulli (strain AAC00-1) (Acidovorax citrulli) protein is Phosphatidylglycerol--prolipoprotein diacylglyceryl transferase.